Here is a 44-residue protein sequence, read N- to C-terminus: Cytochrome b559 subunit beta (44 aa).

A helical membrane pass occupies residues 19 to 35 (WLAVHTLAVPTVFFVGA). H23 contributes to the heme binding site.

The protein belongs to the PsbE/PsbF family. Heterodimer of an alpha subunit and a beta subunit. PSII is composed of 1 copy each of membrane proteins PsbA, PsbB, PsbC, PsbD, PsbE, PsbF, PsbH, PsbI, PsbJ, PsbK, PsbL, PsbM, PsbT, PsbX, PsbY, PsbZ, Psb30/Ycf12, peripheral proteins PsbO, CyanoQ (PsbQ), PsbU, PsbV and a large number of cofactors. It forms dimeric complexes. Requires heme b as cofactor.

The protein localises to the cellular thylakoid membrane. Its function is as follows. This b-type cytochrome is tightly associated with the reaction center of photosystem II (PSII). PSII is a light-driven water:plastoquinone oxidoreductase that uses light energy to abstract electrons from H(2)O, generating O(2) and a proton gradient subsequently used for ATP formation. It consists of a core antenna complex that captures photons, and an electron transfer chain that converts photonic excitation into a charge separation. This Crocosphaera subtropica (strain ATCC 51142 / BH68) (Cyanothece sp. (strain ATCC 51142)) protein is Cytochrome b559 subunit beta.